The primary structure comprises 668 residues: Spindle assembly abnormal protein 6 homolog (668 aa).

The region spanning 39–91 (VHKKELVVRLSDDTDPFFLYNLTLGEEDFQSLKNQQGLLVEFSAFPQRFIDLL) is the PISA domain. The stretch at 182–482 (LGVTQQALAE…NVIAWLNKQL (301 aa)) forms a coiled coil. Positions 623–668 (GSVPVKGQRNGSSAGTVPVRPALPKSGSSPILSAYFPGQQSRLPAS) are disordered.

In terms of assembly, nine homodimers form a cartwheel structure with an internal diameter of 23 nM and radial spokes connecting to the microtubule triplets.

The protein resides in the cytoplasm. It localises to the cytoskeleton. It is found in the microtubule organizing center. Its subcellular location is the centrosome. Central scaffolding component of the centrioles ensuring their 9-fold symmetry. Required for centrosome biogenesis and duplication: required both for mother-centriole-dependent centriole duplication and deuterosome-dependent centriole amplification in multiciliated cells. In Xenopus laevis (African clawed frog), this protein is Spindle assembly abnormal protein 6 homolog (sas6).